A 237-amino-acid chain; its full sequence is Peptidase E (237 aa).

Active-site charge relay system residues include Ser122, Asp137, and His159.

This sequence belongs to the peptidase S51 family.

It localises to the cytoplasm. It carries out the reaction Dipeptidase E catalyzes the hydrolysis of dipeptides Asp-|-Xaa. It does not act on peptides with N-terminal Glu, Asn or Gln, nor does it cleave isoaspartyl peptides.. Hydrolyzes dipeptides containing N-terminal aspartate residues. May play a role in allowing the cell to use peptide aspartate to spare carbon otherwise required for the synthesis of the aspartate family of amino acids. The sequence is that of Peptidase E from Shewanella baltica (strain OS185).